The sequence spans 350 residues: Inositol 2-dehydrogenase/D-chiro-inositol 3-dehydrogenase (350 aa).

Belongs to the Gfo/Idh/MocA family. In terms of assembly, homotetramer.

The enzyme catalyses myo-inositol + NAD(+) = scyllo-inosose + NADH + H(+). The catalysed reaction is 1D-chiro-inositol + NAD(+) = scyllo-inosine + NADH + H(+). It participates in polyol metabolism; myo-inositol degradation into acetyl-CoA; acetyl-CoA from myo-inositol: step 1/7. Involved in the oxidation of myo-inositol (MI) and D-chiro-inositol (DCI) to 2-keto-myo-inositol (2KMI or 2-inosose) and 1-keto-D-chiro-inositol (1KDCI), respectively. The sequence is that of Inositol 2-dehydrogenase/D-chiro-inositol 3-dehydrogenase from Lactiplantibacillus plantarum (strain ATCC BAA-793 / NCIMB 8826 / WCFS1) (Lactobacillus plantarum).